The primary structure comprises 414 residues: Isocitrate dehydrogenase [NADP] cytoplasmic (414 aa).

Serine 2 is subject to N-acetylserine. Tyrosine 42 carries the phosphotyrosine modification. Residue 75-77 (TIT) coordinates NADP(+). Threonine 77 provides a ligand contact to substrate. Lysine 81 carries the N6-acetyllysine modification. Arginine 82 contributes to the NADP(+) binding site. Substrate contacts are provided by residues 94–100 (SPNGTIR) and arginine 109. Lysine 126 is modified (N6-succinyllysine). Arginine 132 and lysine 212 together coordinate substrate. Lysine 224 and lysine 233 each carry N6-acetyllysine. Aspartate 252 is a binding site for Mn(2+). Lysine 260 is a binding site for NADP(+). Residues aspartate 275 and aspartate 279 each contribute to the Mn(2+) site. 310–315 (GTVTRH) serves as a coordination point for NADP(+). Lysine 321 carries the post-translational modification N6-acetyllysine. Asparagine 328 provides a ligand contact to NADP(+). Serine 389 bears the Phosphoserine mark. At lysine 400 the chain carries N6-succinyllysine.

The protein belongs to the isocitrate and isopropylmalate dehydrogenases family. In terms of assembly, homodimer. Requires Mg(2+) as cofactor. It depends on Mn(2+) as a cofactor. Post-translationally, acetylation at Lys-374 dramatically reduces catalytic activity.

Its subcellular location is the cytoplasm. The protein localises to the cytosol. It catalyses the reaction D-threo-isocitrate + NADP(+) = 2-oxoglutarate + CO2 + NADPH. Catalyzes the NADP(+)-dependent oxidative decarboxylation of isocitrate (D-threo-isocitrate) to 2-ketoglutarate (2-oxoglutarate), which is required by other enzymes such as the phytanoyl-CoA dioxygenase. Plays a critical role in the generation of NADPH, an important cofactor in many biosynthesis pathways. May act as a corneal epithelial crystallin and may be involved in maintaining corneal epithelial transparency. This Ovis aries (Sheep) protein is Isocitrate dehydrogenase [NADP] cytoplasmic (IDH1).